The sequence spans 1249 residues: Protein STU1 (1249 aa).

2 stretches are compositionally biased toward low complexity: residues 138 to 156 (LNSS…TATK) and 555 to 574 (AASP…PSSA). Disordered stretches follow at residues 138–161 (LNSS…KPHE), 545–619 (KQLE…NPVF), 644–718 (HVET…LGLG), 755–846 (AEHE…NGNI), 860–891 (AFQT…RPEA), and 1084–1118 (HPAP…EKRT). Residues 581–600 (KKMDLKAMLAERRRAVKEAG) show a composition bias toward basic and acidic residues. Composition is skewed to low complexity over residues 647 to 667 (TSSP…RIRP) and 708 to 718 (SPSLSPSLGLG). The span at 755-774 (AEHEVDELTLKEGQKTRDDG) shows a compositional bias: basic and acidic residues. 3 stretches are compositionally biased toward polar residues: residues 809 to 822 (QQGN…SGRV), 831 to 844 (ATGT…SRNG), and 863 to 878 (TPLN…SSAI). Over residues 1089–1111 (SSSADNSDPMTSALSQLSLSSSK) the composition is skewed to low complexity.

Belongs to the CLASP family. As to quaternary structure, interacts with microtubules.

It is found in the cytoplasm. The protein localises to the cytoskeleton. It localises to the nucleus. The protein resides in the spindle. Its function is as follows. Microtubule binding protein that promotes the stabilization of dynamic microtubules. Required for mitotic spindle formation. The chain is Protein STU1 (STU1) from Cryptococcus neoformans var. neoformans serotype D (strain JEC21 / ATCC MYA-565) (Filobasidiella neoformans).